Reading from the N-terminus, the 171-residue chain is Spiderine-2a (171 aa).

The signal sequence occupies residues 1 to 18 (MKFALVLLGVCAFYLVNA). Positions 19–58 (TGDLETELEASELQELQEALDLIAETPLESLEAEELEEAR) are cleaved as a propeptide — removed in mature form. Residues 59–104 (KFKLPKINWGKLASKAKDVYKKGQKLAKNKNVKKALKYGKQLAENL) form a linear cationic cytotoxin domain region. The 54-residue stretch at 118-171 (NNKCWAIGTRCTDDCDCCPEHHCHCPAKSWTFGLIPCSCQVTESDKVNKCPPAE) folds into the Oxytoxin-type inhibitor cystine knot (ICK) domain. Disulfide bonds link C121–C135, C128–C140, C132–C167, C134–C156, and C142–C154.

Disulfide bonds. In terms of tissue distribution, expressed by the venom gland.

It localises to the secreted. Functionally, has antimicrobial, insecticidal, cytolytic and cytotoxic activity. The sequence is that of Spiderine-2a from Oxyopes takobius (Lynx spider).